Consider the following 408-residue polypeptide: Probable medium-chain specific acyl-CoA dehydrogenase 2, mitochondrial (408 aa).

The transit peptide at M1 to L5 directs the protein to the mitochondrion. Residues Y143 to S152 and W176 to T178 contribute to the FAD site. S152 contacts substrate. Position 263–266 (D263–R266) interacts with substrate. FAD is bound by residues R291 to A293, H301 to Q302, and M355 to C359. Residue E382 is the Proton acceptor of the active site. Substrate is bound at residue G383. Residue T384–Q386 participates in FAD binding. Residue R394 participates in substrate binding.

It belongs to the acyl-CoA dehydrogenase family. In terms of assembly, homotetramer. FAD is required as a cofactor.

It is found in the mitochondrion matrix. It catalyses the reaction a medium-chain 2,3-saturated fatty acyl-CoA + oxidized [electron-transfer flavoprotein] + H(+) = a medium-chain (2E)-enoyl-CoA + reduced [electron-transfer flavoprotein]. It functions in the pathway lipid metabolism; mitochondrial fatty acid beta-oxidation. In terms of biological role, this enzyme is specific for acyl chain lengths of 4 to 16. This chain is Probable medium-chain specific acyl-CoA dehydrogenase 2, mitochondrial, found in Caenorhabditis briggsae.